An 84-amino-acid polypeptide reads, in one-letter code: Sulfur carrier protein TusA (84 aa).

C21 (cysteine persulfide intermediate) is an active-site residue.

Belongs to the sulfur carrier protein TusA family.

Its subcellular location is the cytoplasm. In terms of biological role, sulfur carrier protein which probably makes part of a sulfur-relay system. The sequence is that of Sulfur carrier protein TusA from Pseudomonas syringae pv. syringae (strain B728a).